Here is a 1291-residue protein sequence, read N- to C-terminus: DNA-directed RNA polymerase subunit beta (1291 aa).

This sequence belongs to the RNA polymerase beta chain family. In terms of assembly, the RNAP catalytic core consists of 2 alpha, 1 beta, 1 beta' and 1 omega subunit. When a sigma factor is associated with the core the holoenzyme is formed, which can initiate transcription.

The enzyme catalyses RNA(n) + a ribonucleoside 5'-triphosphate = RNA(n+1) + diphosphate. DNA-dependent RNA polymerase catalyzes the transcription of DNA into RNA using the four ribonucleoside triphosphates as substrates. This Mycoplasma mycoides subsp. mycoides SC (strain CCUG 32753 / NCTC 10114 / PG1) protein is DNA-directed RNA polymerase subunit beta.